A 136-amino-acid chain; its full sequence is Aspartate 1-decarboxylase (136 aa).

The active-site Schiff-base intermediate with substrate; via pyruvic acid is S25. S25 carries the pyruvic acid (Ser) modification. T57 is a substrate binding site. Y58 serves as the catalytic Proton donor. 73–75 (GAA) contributes to the substrate binding site.

It belongs to the PanD family. In terms of assembly, heterooctamer of four alpha and four beta subunits. Pyruvate is required as a cofactor. In terms of processing, is synthesized initially as an inactive proenzyme, which is activated by self-cleavage at a specific serine bond to produce a beta-subunit with a hydroxyl group at its C-terminus and an alpha-subunit with a pyruvoyl group at its N-terminus.

The protein localises to the cytoplasm. The catalysed reaction is L-aspartate + H(+) = beta-alanine + CO2. It functions in the pathway cofactor biosynthesis; (R)-pantothenate biosynthesis; beta-alanine from L-aspartate: step 1/1. Functionally, catalyzes the pyruvoyl-dependent decarboxylation of aspartate to produce beta-alanine. The polypeptide is Aspartate 1-decarboxylase (Mycolicibacterium smegmatis (strain ATCC 700084 / mc(2)155) (Mycobacterium smegmatis)).